A 142-amino-acid polypeptide reads, in one-letter code: HTH-type transcriptional regulator MntR (142 aa).

One can recognise an HTH dtxR-type domain in the interval 1 to 63; the sequence is MPTPSMEDYI…YEKYRGLVLT (63 aa). Positions 8, 11, 77, 99, 102, and 103 each coordinate Mn(2+).

This sequence belongs to the DtxR/MntR family. Homodimer.

The protein resides in the cytoplasm. DNA binding is strongly activated by Mn(2+). Functionally, central regulator of manganese homeostasis. This chain is HTH-type transcriptional regulator MntR, found in Bacillus cereus (strain ATCC 14579 / DSM 31 / CCUG 7414 / JCM 2152 / NBRC 15305 / NCIMB 9373 / NCTC 2599 / NRRL B-3711).